The sequence spans 264 residues: Glutamate racemase (264 aa).

Residues 10–11 (DS) and 42–43 (YG) contribute to the substrate site. The Proton donor/acceptor role is filled by Cys-73. 74 to 75 (NT) serves as a coordination point for substrate. Cys-183 (proton donor/acceptor) is an active-site residue. 184–185 (TH) is a substrate binding site.

It belongs to the aspartate/glutamate racemases family.

It carries out the reaction L-glutamate = D-glutamate. It functions in the pathway cell wall biogenesis; peptidoglycan biosynthesis. In terms of biological role, provides the (R)-glutamate required for cell wall biosynthesis. The sequence is that of Glutamate racemase from Streptococcus pyogenes serotype M4 (strain MGAS10750).